Reading from the N-terminus, the 256-residue chain is Acetyl-coenzyme A carboxylase carboxyl transferase subunit beta 2 (256 aa).

Positions 1 to 256 (MTVKCNKCKE…LAIHAETVSA (256 aa)) constitute a CoA carboxyltransferase N-terminal domain. Residues cysteine 5, cysteine 8, cysteine 24, and cysteine 27 each contribute to the Zn(2+) site. The segment at 5 to 27 (CNKCKEEINKEDLEKNYYICPLC) adopts a C4-type zinc-finger fold.

Belongs to the AccD/PCCB family. As to quaternary structure, acetyl-CoA carboxylase is a heterohexamer composed of biotin carboxyl carrier protein (AccB), biotin carboxylase (AccC) and two subunits each of ACCase subunit alpha (AccA) and ACCase subunit beta (AccD). Zn(2+) is required as a cofactor.

It is found in the cytoplasm. The enzyme catalyses N(6)-carboxybiotinyl-L-lysyl-[protein] + acetyl-CoA = N(6)-biotinyl-L-lysyl-[protein] + malonyl-CoA. The protein operates within lipid metabolism; malonyl-CoA biosynthesis; malonyl-CoA from acetyl-CoA: step 1/1. In terms of biological role, component of the acetyl coenzyme A carboxylase (ACC) complex. Biotin carboxylase (BC) catalyzes the carboxylation of biotin on its carrier protein (BCCP) and then the CO(2) group is transferred by the transcarboxylase to acetyl-CoA to form malonyl-CoA. This is Acetyl-coenzyme A carboxylase carboxyl transferase subunit beta 2 from Lachnospira eligens (strain ATCC 27750 / DSM 3376 / VPI C15-48 / C15-B4) (Eubacterium eligens).